Reading from the N-terminus, the 174-residue chain is NADH-ubiquinone oxidoreductase chain 6 (174 aa).

Helical transmembrane passes span 1-21 (MTYT…GFSS), 24-44 (SPIY…AVIL), 47-67 (GGGY…MVVF), 86-106 (VEVL…VLWA), and 151-171 (WLVV…IEIA).

It belongs to the complex I subunit 6 family. As to quaternary structure, core subunit of respiratory chain NADH dehydrogenase (Complex I) which is composed of 45 different subunits.

The protein resides in the mitochondrion inner membrane. It catalyses the reaction a ubiquinone + NADH + 5 H(+)(in) = a ubiquinol + NAD(+) + 4 H(+)(out). Its function is as follows. Core subunit of the mitochondrial membrane respiratory chain NADH dehydrogenase (Complex I) which catalyzes electron transfer from NADH through the respiratory chain, using ubiquinone as an electron acceptor. Essential for the catalytic activity and assembly of complex I. The chain is NADH-ubiquinone oxidoreductase chain 6 (MT-ND6) from Hylobates lar (Lar gibbon).